The sequence spans 73 residues: Lactogenin (73 aa).

Gln-1 is modified (pyrrolidone carboxylic acid).

It belongs to the pancreatic ribonuclease family. As to expression, milk.

It is found in the secreted. Functionally, secretory RNase specific towards pyrimidine bases, with higher activity towards poly C than poly U. Inhibits cell-free translation. The polypeptide is Lactogenin (Bos taurus (Bovine)).